Here is a 358-residue protein sequence, read N- to C-terminus: Histidinol-phosphate aminotransferase (358 aa).

Lys-210 carries the post-translational modification N6-(pyridoxal phosphate)lysine.

Belongs to the class-II pyridoxal-phosphate-dependent aminotransferase family. Histidinol-phosphate aminotransferase subfamily. As to quaternary structure, homodimer. Pyridoxal 5'-phosphate is required as a cofactor.

It carries out the reaction L-histidinol phosphate + 2-oxoglutarate = 3-(imidazol-4-yl)-2-oxopropyl phosphate + L-glutamate. The protein operates within amino-acid biosynthesis; L-histidine biosynthesis; L-histidine from 5-phospho-alpha-D-ribose 1-diphosphate: step 7/9. In Clostridium beijerinckii (strain ATCC 51743 / NCIMB 8052) (Clostridium acetobutylicum), this protein is Histidinol-phosphate aminotransferase.